We begin with the raw amino-acid sequence, 246 residues long: Transcription factor A, mitochondrial (246 aa).

A mitochondrion-targeting transit peptide spans 1–42 (MALLRGVWGVLNALGKSGADLCAGCGSRLRYPFSFAYVPKWF). A DNA-binding region (HMG box 1) is located at residues 50-118 (PKKPMTSYVR…VYKEEINRIQ (69 aa)). Serine 56 and serine 61 each carry phosphoserine; by PKA. Residue threonine 122 is modified to Phosphothreonine. The HMG box 2 DNA-binding region spans 155 to 219 (PKRPRSAYNI…RYYNEMKSWE (65 aa)). Serine 160 carries the post-translational modification Phosphoserine; by PKA. Phosphoserine occurs at positions 193 and 195.

Monomer; binds DNA as a monomer. Homodimer. Component of the mitochondrial transcription initiation complex, composed at least of TFB2M, TFAM and POLRMT. In this complex TFAM recruits POLRMT to the promoter whereas TFB2M induces structural changes in POLRMT to enable promoter opening and trapping of the DNA non-template strand. Upon metabolic stress, forms a complex composed of FOXO3, SIRT3, TFAM and POLRMT. Interacts with TFB1M and TFB2M. Interacts with CLPX; this enhances DNA-binding. In terms of processing, phosphorylation by PKA within the HMG box 1 impairs DNA binding and promotes degradation by the AAA+ Lon protease.

It is found in the mitochondrion. It localises to the mitochondrion matrix. The protein localises to the mitochondrion nucleoid. In terms of biological role, binds to the mitochondrial light strand promoter and functions in mitochondrial transcription regulation. Component of the mitochondrial transcription initiation complex, composed at least of TFB2M, TFAM and POLRMT that is required for basal transcription of mitochondrial DNA. In this complex, TFAM recruits POLRMT to a specific promoter whereas TFB2M induces structural changes in POLRMT to enable promoter opening and trapping of the DNA non-template strand. Required for accurate and efficient promoter recognition by the mitochondrial RNA polymerase. Promotes transcription initiation from the HSP1 and the light strand promoter by binding immediately upstream of transcriptional start sites. Is able to unwind DNA. Bends the mitochondrial light strand promoter DNA into a U-turn shape via its HMG boxes. Required for maintenance of normal levels of mitochondrial DNA. May play a role in organizing and compacting mitochondrial DNA. This is Transcription factor A, mitochondrial from Bos taurus (Bovine).